Here is a 354-residue protein sequence, read N- to C-terminus: Kelch domain-containing protein 8B (354 aa).

Kelch repeat units follow at residues 1 to 31 (MSAG…HQDG), 32 to 79 (HLLV…VLGK), 81 to 127 (VLVV…ERDG), 128 to 175 (MVYA…LHGN), 176 to 222 (KIYV…MAEG), 224 to 281 (VFSL…SLGG), 282 to 329 (HIVA…QAGP), and 331 to 354 (LFVI…RDGV).

The protein resides in the cytoplasm. It localises to the midbody. Involved in pinching off the separated nuclei at the cleavage furrow and in cytokinesis. Required for mitotic integrity and maintenance of chromosomal stability. Protects cells against mitotic errors, centrosomal amplification, micronucleus formation and aneuploidy. Plays a key role of midbody function involving abscission of the daughter cells during cytokinesis and appropriate chromosomal and nuclear segregation into the daughter cells. The sequence is that of Kelch domain-containing protein 8B from Homo sapiens (Human).